The following is an 853-amino-acid chain: A-kinase anchor protein 3 (853 aa).

The segment at 124-137 (VSFYANRLTNLVIA) is PKA-RII subunit binding domain. Positions 188-240 (RNAAPDKAPGSGDRVSGSSQSPPNLKYKSTLKIKESTKERQGPDDKPPSKKSF) are disordered. S205 and S208 each carry phosphoserine. A compositionally biased stretch (basic and acidic residues) spans 219–235 (KIKESTKERQGPDDKPP). S403 carries the phosphoserine modification. At Y404 the chain carries Phosphotyrosine. A phosphoserine mark is found at S635 and S636.

It belongs to the AKAP110 family. Interacts with ROPN1 and ROPN1L. Interacts with QRICH2. In terms of processing, phosphorylated by STK33 during sperm flagella assembly. Phosphorylated on tyrosine residues. As to expression, testis specific; only expressed in spermatids.

The protein localises to the cytoplasmic vesicle. The protein resides in the secretory vesicle. Its subcellular location is the acrosome. It is found in the cell projection. It localises to the cilium. The protein localises to the flagellum. Its function is as follows. Structural component of sperm fibrous sheath. Required for the formation of the subcellular structure of the sperm flagellum, sperm motility and male fertility. This chain is A-kinase anchor protein 3, found in Homo sapiens (Human).